We begin with the raw amino-acid sequence, 185 residues long: MISVNDFRTGLTISVDNALWQVLDFQHVKPGKGAAFVRSKLRNLRTGSVQEKTFRAGEKVEKAHIENRRMQYLYASGEAHVFMDNGTYEQIELGEKQIERELKFLKENMEVAIMTYQGEVLGVELPNTVELQVTETEPGIKGDTASNVTKPATLETGLVVQVPIFINEGEMLIINTGEGKYVSRA.

It belongs to the elongation factor P family.

It is found in the cytoplasm. The protein operates within protein biosynthesis; polypeptide chain elongation. Involved in peptide bond synthesis. Stimulates efficient translation and peptide-bond synthesis on native or reconstituted 70S ribosomes in vitro. Probably functions indirectly by altering the affinity of the ribosome for aminoacyl-tRNA, thus increasing their reactivity as acceptors for peptidyl transferase. The polypeptide is Elongation factor P (Bacillus cereus (strain B4264)).